Reading from the N-terminus, the 398-residue chain is Phosphoglycerate kinase (398 aa).

Residues 21 to 23, arginine 36, 59 to 62, arginine 119, and arginine 157 contribute to the substrate site; these read DFN and HLGR. Residues lysine 208, glycine 296, glutamate 327, and 354–357 contribute to the ATP site; that span reads GGDS.

The protein belongs to the phosphoglycerate kinase family. In terms of assembly, monomer.

It is found in the cytoplasm. It catalyses the reaction (2R)-3-phosphoglycerate + ATP = (2R)-3-phospho-glyceroyl phosphate + ADP. It functions in the pathway carbohydrate degradation; glycolysis; pyruvate from D-glyceraldehyde 3-phosphate: step 2/5. This chain is Phosphoglycerate kinase, found in Streptococcus pneumoniae (strain 70585).